The chain runs to 120 residues: Autophagy-related protein 8C (120 aa).

Residues 1 to 20 (MARSSFKLEHPLERRQAEAN) are disordered. Residue Gly-117 is the site of Phosphatidylethanolamine amidated glycine attachment. Residues 118-120 (LFV) constitute a propeptide, removed in mature form.

It belongs to the ATG8 family. Interacts with ATG4. In terms of processing, the C-terminal 3 residues are removed by ATG4 to expose Gly-117 at the C-terminus. The C-terminal Gly is then amidated with phosphatidylethanolamine by an activating system similar to that for ubiquitin.

Its subcellular location is the cytoplasmic vesicle. The protein resides in the autophagosome membrane. It localises to the vacuole membrane. The protein localises to the cytoplasm. It is found in the cytoskeleton. Its function is as follows. Ubiquitin-like modifier involved in autophagosomes formation. May mediate the delivery of the autophagosomes to the vacuole via the microtubule cytoskeleton. The chain is Autophagy-related protein 8C (ATG8C) from Oryza sativa subsp. indica (Rice).